Consider the following 1486-residue polypeptide: Chromosome partition protein MukB (1486 aa).

34 to 41 provides a ligand contact to ATP; sequence GGNGAGKS. 3 coiled-coil regions span residues 326 to 418, 444 to 480, and 509 to 603; these read LEAD…QYNQ, LETF…QAYQ, and RHLA…RAPV. The segment at 666-783 is flexible hinge; it reads PGGSEDQRLN…EVPLFGRAAR (118 aa). Coiled-coil stretches lie at residues 835-923, 977-1115, and 1209-1266; these read EAEI…AKLE, EMLS…TAKA, and VEAI…QNVS.

The protein belongs to the SMC family. MukB subfamily. Homodimerization via its hinge domain. Binds to DNA via its C-terminal region. Interacts, and probably forms a ternary complex, with MukE and MukF via its C-terminal region. The complex formation is stimulated by calcium or magnesium. Interacts with tubulin-related protein FtsZ.

Its subcellular location is the cytoplasm. It is found in the nucleoid. In terms of biological role, plays a central role in chromosome condensation, segregation and cell cycle progression. Functions as a homodimer, which is essential for chromosome partition. Involved in negative DNA supercoiling in vivo, and by this means organize and compact chromosomes. May achieve or facilitate chromosome segregation by condensation DNA from both sides of a centrally located replisome during cell division. The chain is Chromosome partition protein MukB from Escherichia coli O1:K1 / APEC.